A 101-amino-acid chain; its full sequence is uncharacterized protein (101 aa).

A run of 2 helical transmembrane segments spans residues 3 to 23 (IIGSAFLGIVFCILLAFAIIF) and 68 to 88 (VIVLTIICFLIFITPIIIIVI).

The protein resides in the cell membrane. This is an uncharacterized protein from Ureaplasma parvum serovar 3 (strain ATCC 700970).